The following is a 199-amino-acid chain: Molybdenum cofactor guanylyltransferase (199 aa).

GTP contacts are provided by residues 12-14, Lys25, Asn53, Asp71, and Asp101; that span reads LAG. Asp101 serves as a coordination point for Mg(2+).

Belongs to the MobA family. As to quaternary structure, monomer. It depends on Mg(2+) as a cofactor.

The protein resides in the cytoplasm. The catalysed reaction is Mo-molybdopterin + GTP + H(+) = Mo-molybdopterin guanine dinucleotide + diphosphate. Transfers a GMP moiety from GTP to Mo-molybdopterin (Mo-MPT) cofactor (Moco or molybdenum cofactor) to form Mo-molybdopterin guanine dinucleotide (Mo-MGD) cofactor. This chain is Molybdenum cofactor guanylyltransferase, found in Cupriavidus taiwanensis (strain DSM 17343 / BCRC 17206 / CCUG 44338 / CIP 107171 / LMG 19424 / R1) (Ralstonia taiwanensis (strain LMG 19424)).